The following is a 490-amino-acid chain: Fumitremorgin C monooxygenase (490 aa).

The chain crosses the membrane as a helical span at residues 12–32; the sequence is LGVVGASLIVILGIILLFPLG. Cysteine 442 lines the heme pocket.

It belongs to the cytochrome P450 family. Requires heme as cofactor.

It localises to the membrane. The enzyme catalyses fumitremorgin C + 2 reduced [NADPH--hemoprotein reductase] + 2 O2 = 12alpha,13alpha-dihydroxyfumitremorgin C + 2 oxidized [NADPH--hemoprotein reductase] + 2 H2O + 2 H(+). It functions in the pathway mycotoxin biosynthesis. Its function is as follows. Cytochrome P450 monooxygenase; part of the gene cluster that mediates the biosynthesis of fumitremorgins, indole alkaloids that carry not only intriguing chemical structures, but also interesting biological and pharmacological activities. The biosynthesis of fumitremorgin-type alkaloids begins by condensation of the two amino acids L-tryptophan and L-proline to brevianamide F, catalyzed by the non-ribosomal peptide synthetase ftmA. Brevianamide F is then prenylated by the prenyltransferase ftmPT1/ftmB in the presence of dimethylallyl diphosphate, resulting in the formation of tryprostatin B. The three cytochrome P450 monooxygenases, ftmP450-1/ftmC, ftmP450-2/ftmE and ftmP450-3/FtmG, are responsible for the conversion of tryprostatin B to 6-hydroxytryprostatin B, tryprostatin A to fumitremorgin C and fumitremorgin C to 12,13-dihydroxyfumitremorgin C, respectively. The putative methyltransferase ftmMT/ftmD is expected for the conversion of 6-hydroxytryprostatin B to tryprostatin A. FtmPT2/FtmH catalyzes the prenylation of 12,13-dihydroxyfumitre-morgin C in the presence of dimethylallyl diphosphate, resulting in the formation of fumitremorgin B. Fumitremorgin B is further converted to verruculogen by ftmOx1/ftmF via the insertion of an endoperoxide bond between the two prenyl moieties. In some fungal species, verruculogen is further converted to fumitremorgin A, but the enzymes involved in this step have not been identified yet. This is Fumitremorgin C monooxygenase from Aspergillus fumigatus (strain ATCC MYA-4609 / CBS 101355 / FGSC A1100 / Af293) (Neosartorya fumigata).